We begin with the raw amino-acid sequence, 238 residues long: Probable transcriptional regulatory protein SPH_2064 (238 aa).

The protein belongs to the TACO1 family. YeeN subfamily.

It localises to the cytoplasm. This Streptococcus pneumoniae (strain Hungary19A-6) protein is Probable transcriptional regulatory protein SPH_2064.